A 329-amino-acid chain; its full sequence is Transcription factor RF2b (329 aa).

2 disordered regions span residues 1–24 and 62–97; these read MQEP…RSEV and SSGP…DGSG. Residues 132–195 form the bZIP domain; that stretch reads DPKRAKRILA…TGLSAENAEL (64 aa). The segment at 134 to 155 is basic motif; it reads KRAKRILANRQSAARSKERKAR. The interval 160 to 174 is leucine-zipper; it reads LERKVQTLQTEATTL. Residues 260–303 form a disordered region; sequence RQNGGTQLPPQFQPPRPNVPNHMLSHPNGLQDIMQQDPLGRLQG.

This sequence belongs to the bZIP family. Binds DNA as a homodimer or as a heterodimer with RF2a. The heterodimer binds stronger to DNA than the homodimer. As to expression, expressed at high levels in roots, low level in leaf sheath, but not in leaf blade. Predominantly expressed in vascular tissues.

The protein resides in the nucleus. Transcription factor probably involved in vascular development and shoot tissue organization. Binds to the DNA sequence 5'-CCGAGTGTGCCCCTGG-3' present in the promoter region Box II of the phloem-specific rice tungro bacilliform virus (RTBV) promoter. May regulate tissue-specific expression of the RTBV promoter and virus replication. The chain is Transcription factor RF2b (RF2b) from Oryza sativa subsp. japonica (Rice).